The chain runs to 394 residues: Elongation factor Tu (394 aa).

A tr-type G domain is found at 10 to 204 (KPHINVGTIG…YLDTYIPEPK (195 aa)). Positions 19-26 (GHVDHGKT) are G1. 19–26 (GHVDHGKT) provides a ligand contact to GTP. Residue T26 coordinates Mg(2+). The interval 60–64 (GITIN) is G2. The tract at residues 81–84 (DCPG) is G3. Residues 81 to 85 (DCPGH) and 136 to 139 (NKCD) contribute to the GTP site. Positions 136-139 (NKCD) are G4. Positions 174 to 176 (SAL) are G5.

Belongs to the TRAFAC class translation factor GTPase superfamily. Classic translation factor GTPase family. EF-Tu/EF-1A subfamily. Monomer.

The protein localises to the cytoplasm. It carries out the reaction GTP + H2O = GDP + phosphate + H(+). Functionally, GTP hydrolase that promotes the GTP-dependent binding of aminoacyl-tRNA to the A-site of ribosomes during protein biosynthesis. This Buchnera aphidicola subsp. Baizongia pistaciae (strain Bp) protein is Elongation factor Tu.